Here is a 395-residue protein sequence, read N- to C-terminus: L-methionine gamma-lyase (395 aa).

Residues 56–58 (YTR) and 86–87 (GM) contribute to the pyridoxal 5'-phosphate site. A substrate-binding site is contributed by Tyr-111. Residue 206 to 208 (SVT) coordinates pyridoxal 5'-phosphate. Lys-209 carries the post-translational modification N6-(pyridoxal phosphate)lysine. Substrate is bound at residue Arg-373.

This sequence belongs to the trans-sulfuration enzymes family. L-methionine gamma-lyase subfamily. In terms of assembly, homotetramer. Requires pyridoxal 5'-phosphate as cofactor.

The enzyme catalyses L-methionine + H2O = methanethiol + 2-oxobutanoate + NH4(+). It carries out the reaction L-homocysteine + H2O = 2-oxobutanoate + hydrogen sulfide + NH4(+) + H(+). In terms of biological role, catalyzes the alpha,gamma-elimination of L-methionine to produce methanethiol, 2-oxobutanoate and ammonia; methanethiol (methyl mercaptan) is considered to be one of the main causes of the oral malodor associated with periodontitis. Also displays homocysteine desulfhydrase activity, degrading homocysteine to produce hydrogen sulfide, 2-oxobutanoate and ammonia. L-cysteine and S-methyl-L-cysteine are poor substrates for the enzyme. Its function is as follows. Plays an important role in the resistance of F.nucleatum to the antibacterial agent 3-chloro-DL-alanine (3CA), thanks to its 3CA chloride-lyase (deaminating) activity. This chain is L-methionine gamma-lyase, found in Fusobacterium nucleatum subsp. polymorphum (Fusobacterium polymorphum).